The following is a 157-amino-acid chain: Transcriptional repressor NrdR (157 aa).

A zinc finger lies at 3-34; it reads CPFCNTVDTKVIDSRLVSEGSQIKRRRQCAIC. Residues 49–139 enclose the ATP-cone domain; it reads PRVIKNDDLL…VYRSFEDVRE (91 aa).

This sequence belongs to the NrdR family. Requires Zn(2+) as cofactor.

Negatively regulates transcription of bacterial ribonucleotide reductase nrd genes and operons by binding to NrdR-boxes. This Hamiltonella defensa subsp. Acyrthosiphon pisum (strain 5AT) protein is Transcriptional repressor NrdR.